Reading from the N-terminus, the 40-residue chain is ECADVYKECWYPEKPCCKDRACQCSLGMNCKCKATLGDIF.

Intrachain disulfides connect cysteine 2/cysteine 17, cysteine 9/cysteine 22, cysteine 16/cysteine 32, and cysteine 24/cysteine 30.

In terms of tissue distribution, expressed by the venom gland.

It is found in the secreted. Its function is as follows. Neurotoxin. This chain is U2-ctenitoxin-Pr1a, found in Phoneutria reidyi (Brazilian Amazonian armed spider).